Reading from the N-terminus, the 396-residue chain is Flavohemoprotein (396 aa).

Residues 1–136 (MLDAQTIATV…LANVFINREA (136 aa)) enclose the Globin domain. A heme b-binding site is contributed by His-85. Residues Tyr-95 and Glu-135 each act as charge relay system in the active site. The reductase stretch occupies residues 147 to 396 (GGWEGTRDFR…YECFGPHKVL (250 aa)). The region spanning 150 to 255 (EGTRDFRIVA…VAPAGDFFMA (106 aa)) is the FAD-binding FR-type domain. Residues Tyr-188 and 204 to 207 (RQYS) each bind FAD. An NADP(+)-binding site is contributed by 268-273 (GVGQTP). Residue 389 to 392 (CFGP) participates in FAD binding.

Belongs to the globin family. Two-domain flavohemoproteins subfamily. This sequence in the C-terminal section; belongs to the flavoprotein pyridine nucleotide cytochrome reductase family. Monomer. The cofactor is FAD. It depends on heme b as a cofactor.

Its subcellular location is the cytoplasm. It carries out the reaction 2 nitric oxide + NADPH + 2 O2 = 2 nitrate + NADP(+) + H(+). The catalysed reaction is 2 nitric oxide + NADH + 2 O2 = 2 nitrate + NAD(+) + H(+). Functionally, is involved in NO detoxification in an aerobic process, termed nitric oxide dioxygenase (NOD) reaction that utilizes O(2) and NAD(P)H to convert NO to nitrate, which protects the bacterium from various noxious nitrogen compounds. Therefore, plays a central role in the inducible response to nitrosative stress. In terms of biological role, in the presence of oxygen and NADH, HMP has NADH oxidase activity, which leads to the generation of superoxide and H(2)O(2), both in vitro and in vivo, and it has been suggested that HMP might act as an amplifier of superoxide stress. Under anaerobic conditions, HMP also exhibits nitric oxide reductase and FAD reductase activities. However, all these reactions are much lower than NOD activity. Various electron acceptors are also reduced by HMP in vitro, including dihydropterine, ferrisiderophores, ferric citrate, cytochrome c, nitrite, S-nitrosoglutathione, and alkylhydroperoxides. However, it is unknown if these reactions are of any biological significance in vivo. The protein is Flavohemoprotein (hmp) of Escherichia coli (strain K12).